We begin with the raw amino-acid sequence, 735 residues long: Rho GTPase-activating protein SYDE1 (735 aa).

A disordered region spans residues 1-253 (MAEPLLRKTF…SPTSFRPYEV (253 aa)). Positions 14–31 (RGREKLPRKKSDAKERGH) are enriched in basic and acidic residues. The span at 35-46 (RPEPSPPEPEPQ) shows a compositional bias: pro residues. Low complexity predominate over residues 47-71 (APEGSQAGAEGPSSPEASRSPARGA). Pro residues predominate over residues 122 to 131 (PPAPEPPGPQ). Over residues 211-221 (GGPGPAAGPGG) the composition is skewed to gly residues. Phosphoserine is present on residues Ser224, Ser231, Ser235, and Ser244. Positions 249–366 (RPYEVGPAAR…FRGCQAQQLA (118 aa)) constitute a C2 domain. A Rho-GAP domain is found at 398–604 (LPLPLLVERE…YLLQSWPDPR (207 aa)). Position 575 is a phosphoserine (Ser575). Disordered stretches follow at residues 608–651 (QSPD…SNRY) and 674–696 (DYDHVTGSDSEDEDEEVGEPRVT). 2 positions are modified to phosphoserine: Ser681 and Ser683.

In terms of processing, palmitoylated. Probably palmitoylated by ZDHHC3 and ZDHHC7. In terms of tissue distribution, expressed in trophoblast cells of placental villi.

Functionally, GTPase activator for the Rho-type GTPases. As a GCM1 downstream effector, it is involved in placental development and positively regulates trophoblast cells migration. It regulates cytoskeletal remodeling by controlling the activity of Rho GTPases including RHOA, CDC42 and RAC1. The chain is Rho GTPase-activating protein SYDE1 (SYDE1) from Homo sapiens (Human).